The following is a 420-amino-acid chain: Caspase-12 (420 aa).

A CARD domain is found at 1–92; it reads MAAKRTHERD…QLSLQFPSDD (92 aa). Ser85 and Ser90 each carry phosphoserine. The tract at residues 93 to 115 is disordered; the sequence is EEDELQKMFTPSSASESRGKVED. Active-site residues include His251 and Cys299.

It belongs to the peptidase C14A family. Heterotetramer that consists of two anti-parallel arranged heterodimers, each one formed by two subunits (Potential). May interact with TRAF2.

Its function is as follows. Involved in the activation cascade of caspases responsible for apoptosis execution. In Rattus norvegicus (Rat), this protein is Caspase-12 (Casp12).